A 117-amino-acid chain; its full sequence is UPF0295 protein YgzB (117 aa).

The next 2 helical transmembrane spans lie at 13 to 33 (TFAL…IFFK) and 41 to 61 (LFMI…FWIG).

Belongs to the UPF0295 family.

It localises to the cell membrane. This is UPF0295 protein YgzB (ygzB) from Bacillus subtilis (strain 168).